Here is a 375-residue protein sequence, read N- to C-terminus: Arabinose metabolism transcriptional repressor (375 aa).

In terms of domain architecture, HTH gntR-type spans 1–70; that stretch reads METKYNFVKQ…QGAGTFCADR (70 aa). A DNA-binding region (H-T-H motif) is located at residues 30 to 49; it reads ENELMKEYNVSRHTVRKAID.

It is found in the cytoplasm. Transcriptional repressor of the arabinose utilization genes. The chain is Arabinose metabolism transcriptional repressor (araR) from Halalkalibacterium halodurans (strain ATCC BAA-125 / DSM 18197 / FERM 7344 / JCM 9153 / C-125) (Bacillus halodurans).